The chain runs to 215 residues: KID-containing protein 1 (215 aa).

2 disordered regions span residues 1 to 132 (MAGG…NKKR) and 150 to 183 (NPKS…GDVL). A compositionally biased stretch (acidic residues) spans 64–81 (DSEEEDEESEEDNDEEEL). A Nuclear localization signal motif is present at residues 129 to 137 (NKKRRLQIY). A compositionally biased stretch (acidic residues) spans 162-175 (DNDDEEGDDGDLSD). The tract at residues 177–204 (ERGGDVLARRPSFKNRALKSMSCFALSD) is kinase-inducible domain (KID). At serine 188 the chain carries Phosphoserine; by PKA.

As to quaternary structure, interacts with HDA19; Ser-188 is critical for this interaction. In terms of tissue distribution, strongly expressed in stems, flowers, roots and immature siliques, but not detected in leaf blades of seedlings.

It is found in the nucleus. Functionally, transcription activator which may regulates gene expression through interaction with the histone deacetylase HDA19. In Brassica napus (Rape), this protein is KID-containing protein 1.